Here is a 150-residue protein sequence, read N- to C-terminus: UPF0098 protein TC_0109 (150 aa).

The protein belongs to the UPF0098 family.

The polypeptide is UPF0098 protein TC_0109 (Chlamydia muridarum (strain MoPn / Nigg)).